Consider the following 304-residue polypeptide: tRNA-5-methyluridine(54) 2-sulfurtransferase (304 aa).

Residues C3, C6, C22, and H25 each contribute to the Zn(2+) site. ATP-binding residues include A53 and I79. Residues C131 and C134 each coordinate [4Fe-4S] cluster. Residues R138 and G157 each coordinate ATP. Residue C224 coordinates [4Fe-4S] cluster. Residues C274, C277, C286, and C289 each contribute to the Zn(2+) site.

Belongs to the TtcA family. TtuA subfamily. Homodimer. [4Fe-4S] cluster serves as cofactor. Requires Mg(2+) as cofactor.

It catalyses the reaction 5-methyluridine(54) in tRNA + hydrogen sulfide + ATP = 5-methyl-2-thiouridine(54) in tRNA + AMP + diphosphate. The protein operates within tRNA modification. Functionally, catalyzes the ATP-dependent 2-thiolation of 5-methyluridine residue at position 54 in the T loop of tRNAs, leading to 5-methyl-2-thiouridine (m(5)s(2)U or s(2)T). This modification allows thermal stabilization of tRNAs in thermophilic microorganisms, and is required for cell growth at high temperatures. Can use free sulfide as sulfur source in vitro. This Thermotoga maritima (strain ATCC 43589 / DSM 3109 / JCM 10099 / NBRC 100826 / MSB8) protein is tRNA-5-methyluridine(54) 2-sulfurtransferase.